Here is a 330-residue protein sequence, read N- to C-terminus: Polyprenyl transferase ausN (330 aa).

The next 5 membrane-spanning stretches (helical) occupy residues A116–P136, L165–P185, I189–V209, A238–L258, and V260–A280.

This sequence belongs to the UbiA prenyltransferase family. Requires Mg(2+) as cofactor.

Its subcellular location is the membrane. The catalysed reaction is 3,5-dimethylorsellinate + (2E,6E)-farnesyl diphosphate = (3R)-3-farnesyl-6-hydroxy-2,3,5-trimethyl-4-oxocyclohexa-1,5-diene-1-carboxylate + diphosphate + H(+). It participates in secondary metabolite biosynthesis; terpenoid biosynthesis. Polyprenyl transferase; part of the gene cluster B that mediates the biosynthesis of austinol and dehydroaustinol, two fungal meroterpenoids. The first step of the pathway is the synthesis of 3,5-dimethylorsellinic acid by the polyketide synthase ausA. 3,5-dimethylorsellinic acid is then prenylated by the polyprenyl transferase ausN. Further epoxidation by the FAD-dependent monooxygenase ausM and cyclization by the probable terpene cyclase ausL lead to the formation of protoaustinoid A. Protoaustinoid A is then oxidized to spiro-lactone preaustinoid A3 by the combined action of the FAD-binding monooxygenases ausB and ausC, and the dioxygenase ausE. Acid-catalyzed keto-rearrangement and ring contraction of the tetraketide portion of preaustinoid A3 by ausJ lead to the formation of preaustinoid A4. The aldo-keto reductase ausK, with the help of ausH, is involved in the next step by transforming preaustinoid A4 into isoaustinone which is in turn hydroxylated by the P450 monooxygenase ausI to form austinolide. Finally, the cytochrome P450 monooxygenase ausG modifies austinolide to austinol. Austinol can be further modified to dehydroaustinol which forms a diffusible complex with diorcinol that initiates conidiation. Due to genetic rearrangements of the clusters and the subsequent loss of some enzymes, the end products of the Emericella nidulans austinoid biosynthesis clusters are austinol and dehydroaustinol, even if additional enzymes, such as the O-acetyltransferase ausQ and the cytochrome P450 monooxygenase ausR are still functional. This chain is Polyprenyl transferase ausN, found in Emericella nidulans (strain FGSC A4 / ATCC 38163 / CBS 112.46 / NRRL 194 / M139) (Aspergillus nidulans).